Reading from the N-terminus, the 327-residue chain is MSFKKFPRHLLSIRDLSRGEIVKLIDRSSEIKQAYKQNFQNRRSVQMSGLSSQNVAMIFSKRSTRTRVSVESAVSCLGGNAMFLGKDDIQLGVNESLYDTSKVISSMVSGIVARVNKYSDVATLAKHASCPVINGLCDTFHPLQALADLLTIKETFKSFDGLKVAWVGDANNVLHDLMIANAKVGIHTSVAKPKDVNVRDDILSIVNEAANENGSTFEIVNDPKVAVKNADIVVTDTWISMGQEAEKEQRLKQFTGFQVTGEIMKLAKPSCKFMHCLPRHPEEVSDEVFYGENSLVFQEAENRKWTTVAVLEALLVNRGEILPPASA.

Carbamoyl phosphate is bound by residues 63 to 66 (STRT), arginine 114, histidine 141, and glutamine 144. The L-ornithine site is built by asparagine 172, aspartate 236, serine 240, and methionine 241. Residue cysteine 276 is the Proton acceptor of the active site. Carbamoyl phosphate contacts are provided by residues 276–277 (CL) and arginine 303.

It belongs to the aspartate/ornithine carbamoyltransferase superfamily. OTCase family. In terms of assembly, interacts with trx2.

The protein localises to the mitochondrion matrix. The catalysed reaction is carbamoyl phosphate + L-ornithine = L-citrulline + phosphate + H(+). The protein operates within amino-acid biosynthesis; L-arginine biosynthesis; L-arginine from L-ornithine and carbamoyl phosphate: step 1/3. Functionally, ornithine carbamoyltransferase involved in the synthesis of arginine from glutamate via ornithine and the urea cycle. In Schizosaccharomyces pombe (strain 972 / ATCC 24843) (Fission yeast), this protein is Ornithine carbamoyltransferase, mitochondrial (arg3).